We begin with the raw amino-acid sequence, 373 residues long: 3-isopropylmalate dehydrogenase gloI (373 aa).

Residues Ser-92, Arg-98, and Arg-108 each contribute to the substrate site. 3 residues coordinate Mg(2+): Asp-228, Asp-253, and Asp-257. NADP(+) contacts are provided by residues 294–300 and Asn-307; that span reads HGSAPDI.

Belongs to the isocitrate and isopropylmalate dehydrogenases family. As to quaternary structure, homodimer. It depends on Mg(2+) as a cofactor. Requires Mn(2+) as cofactor.

The catalysed reaction is (2R,3S)-3-isopropylmalate + NAD(+) = 4-methyl-2-oxopentanoate + CO2 + NADH. It functions in the pathway mycotoxin biosynthesis. 3-isopropylmalate dehydrogenase; part of the gene cluster that mediates the biosynthesis of pneumocandins, lipohexapeptides of the echinocandin family that prevent fungal cell wall formation by non-competitive inhibition of beta-1,3-glucan synthase. The 10,12-dimethylmyristoyl side chain is synthesized by the reducing polyketide synthase gloL/GLPKS4. The thioesterase gloN/GLHYD exclusively interacts with gloL/GLPKS4 to maintain turnover of the polyketide side chain. The 10R,12S-dimethylmyristic acid is then transferred to the first thiolation domain of the nonribosomal peptide synthetase gloA/GLNRPS4 by the acyl-AMP ligase gloD/GLligase, followed by its acylation to L-ornithine to trigger elongation of the cyclic hexapeptide. L-ornithine, 4R-hydroxyl-L-proline (generated from L-proline by the dioxygenase gloF/GLOXY2), 3S-hydroxyl-L-homotyrosine (generated by gloG/GLHtyB, gloH/GLHtyA, gloI/GLHtyC, gloJ/GLHtyD and hydroxylated at C-3 by the dioxygenase gloM/GLOXY1), 3R-hydroxyl-L-glutamine (generated from L-glutamine probably by the dioxygenase gloE/GLOXY3) and 3S-hydroxyl-L-proline (generated from L-proline by the dioxygenase gloF/GLOXY2 to yield pneumocandin B0), or 3S-hydroxyl-4S-methyl-L-proline (generated from L-leucine by the dioxygenase gloC/GLOXY4 to yield pneumocandin A0) are sequentially added to the growing chain. The last C domain of gloA/GLNRPS4 is proposed to be responsible for cyclization by condensation to form the peptide bond between L-ornithine and 3S-hydroxyl-4S-methyl-L-proline (for pneumocandin A0) or 3S-hydroxyl-L-proline (for pneumocandin B0). Finally, the subsequent C-4 hydroxylation of 3S-hydroxyl-L-homotyrosine and L-ornithine dihydroxylation at C-4 and C-5 are performed by the cytochrome P450 monooxygenases gloP/GLP450-1 and gloO/GLP450-2, respectively. The protein is 3-isopropylmalate dehydrogenase gloI of Glarea lozoyensis (strain ATCC 20868 / MF5171).